A 471-amino-acid polypeptide reads, in one-letter code: MKSAVENLSPTRVKLDVEVPFEELQPSIAEAYKTIAEQVQIPGFRKGKFPNRLIDQRVGRGYVLETAINEGLNGWYQNAVAETGLRPLSRPEVEITEVPDPAATDGELKFKVEVDVRPEVELPDYAGITVEVAPAEQSDEDRQKALDDLRGRFGTLKPADRPAAKDDFITIDINAKIADEDVDSATGLSYQVGAGTMLEGLDEAVEGLSTDEEAIFDTKLVGGEHAGEAAQVTVKLTAVKVRELPEADDDFAQLASEFDTIAELREDLVKQVNQSKTVEQGVEARDKVMEKLVELIEVPIPESVIEEQLEQHFDPANAHGEEDHDTEEHRVEVRENTERAFKNEIILDAVADKEEISVSQAELIDYIVNSASQYGMDPNQFAQMLDQSGQVPMVVSEVRRRKALAHVLGLATVTDTEGAAVDLSDFVKPAVDPELEAALNEAAGVTGEDDDTEAEEERVTVSADDPGAARF.

The PPIase FKBP-type domain maps to 166–245; the sequence is DDFITIDINA…LTAVKVRELP (80 aa). Residues 442 to 471 are disordered; sequence AAGVTGEDDDTEAEEERVTVSADDPGAARF. Residues 447-456 are compositionally biased toward acidic residues; that stretch reads GEDDDTEAEE.

Belongs to the FKBP-type PPIase family. Tig subfamily.

Its subcellular location is the cytoplasm. It catalyses the reaction [protein]-peptidylproline (omega=180) = [protein]-peptidylproline (omega=0). Its function is as follows. Involved in protein export. Acts as a chaperone by maintaining the newly synthesized protein in an open conformation. Functions as a peptidyl-prolyl cis-trans isomerase. This Renibacterium salmoninarum (strain ATCC 33209 / DSM 20767 / JCM 11484 / NBRC 15589 / NCIMB 2235) protein is Trigger factor.